The chain runs to 1391 residues: MASVTSIDVDATQHLRDILKLDRTEDSINGNQRKSNSSFSSDLNGLLVTDQVAAVGTSLSDTNLCSAAVLNSERQVICLSGDDSSSCIKITGKDVEIVASHDSNICSKARGSNKVKIQPVAKYDWEQKYYCGNLIAVSNDYIAYATRGANGSAMVRVLSLTTAERILLKGITGSVTDLAFAHLKSNHLACLDEAGSLFVWQLTMTNGKIQDDIVVHIRRPENTVLSIFRRIIWCPYIPEENEENVVDDTSQTIALLHEDKAEVWDLEIIQTNHNTWPVDVSEIKEGFIIVKGHSGRLSEGALSPDGTVLATASHDGYVKFWQIYIEGQDQPRCLHEWKPHNGRPLSCLLFCDNHKKQDPEVPFWRFLITGADQNRELKVWCTVSWTSLQTIQFSPDPFSSGVLPGLKASLDLSAEFLILTDVQRKVLYVMELNQNQDEGKATFTSISEFLLTHPVLSFGIQDVNHCRLRNTEVLPAEEDNNSINQEEILECESVEAAAGVLIKLFCVHTKALQDVQIWFQPHQNAEPAILGTAQPQQENFALPDIQGINMERMPSMQGSMHGSQSDLCRISTDFLLLPTDSVPKLMTPDAFMSPSASLQQGITSPGSIISTLTTVTPISSTSNSDTVLARPSEEMTLSTMLQLDTSATLSNPSRDGNPLSNSRNPAVVIPGMSETIVSIPAAQMPSSNHPLELQDLDPLVVPQASPTRERSPDVISSASTAMPQDIPEIASETLQRSYISSVPSGLSVEGCESSHHSDSMSSAASALHLLSPHNLSSLDHGHRPIIIGSSVVENERISAPSLLESTIQEDNVDIGLPQPWPAAPDITKETRNNLVDSSRNGQDRGDSSFHRHNYHLLQQHDSQDASAEQSDHDDEVASLASISGSFGGKGQHLLIKDWKSKLSPRSSPKLRRKSKKDEMELAKSPRVSDHLVNLELQEELLCMLRSQQKELSDLRQNQLELMKKLTDHMDAVQSSIMGHVERVIDTQQEQEQRRVERILSDGHERNGQLQEYLSQQLSHSLSGSLSNRVDKIIREEMKKTVSQCISKTLDPVAAQLTSSVAAKVTAVEGVLKENVTKMVKSKNVTDAIGRVAADSLQTVIHSAYREAFQSIVLPAFERSCQSMFQQVNNSFKQGTQDYMQQLEAHLRSIKMNEQETRDPVVTQLQQMVDSLQTVTDQLASNITSNVRSEVQHQLHIAVGNMQDSILSQVQRIIKEEVSHAMKEQQAAVTSSIMQAMRSAAGTPIPSSHMDFHSQQTHILQLMQQGQINQAFQQALTASDLNLILYVCETVDPQQVFGQHPCPLTQPVLLSLIQQLSFDFGSRTEIKLNYLEEAVMNLDHSDPVTRDHMGTVLNQVRQKLYQFLQAEPQNALQKPARRLLIMLQGLVPPTLS.

WD repeat units lie at residues 170 to 210 (GITG…GKIQ), 226 to 274 (SIFR…TNHN), 292 to 331 (GHSG…QDQP), and 340 to 390 (HNGR…SLQT). 2 disordered regions span residues 703–724 (QASP…AMPQ) and 897–924 (DWKS…LAKS). Residues 915-924 (KKDEMELAKS) show a composition bias toward basic and acidic residues. A coiled-coil region spans residues 935-968 (ELQEELLCMLRSQQKELSDLRQNQLELMKKLTDH).

Belongs to the WD repeat EDC4 family.

The protein localises to the cytoplasm. The protein resides in the P-body. It is found in the nucleus. Functionally, in the process of mRNA degradation, seems to play a role in mRNA decapping. The chain is Enhancer of mRNA-decapping protein 4 (edc4) from Xenopus laevis (African clawed frog).